Consider the following 426-residue polypeptide: Dihydropyrimidine dehydrogenase (NADP(+)), chloroplastic (426 aa).

The N-terminal 44 residues, 1–44, are a transit peptide targeting the chloroplast; sequence MASMSFALNRFSGLSSKTTLSADFDPSSRRSFLPPTRVGLKISS. Position 45 is an N-acetylalanine (Ala-45). Substrate-binding positions include Asn-129 and 188-190; that span reads NFS. The active-site Nucleophile is the Cys-191. Residue 256 to 257 coordinates substrate; that stretch reads NT. The tract at residues 395–414 is disordered; it reads VEQRKAEKRGLKSDKDWTGD.

The protein belongs to the dihydropyrimidine dehydrogenase family. As to expression, expressed in roots, leaves, stems, siliques and flowers. Highly expressed ion dry seeds.

It is found in the plastid. The protein localises to the chloroplast. It catalyses the reaction 5,6-dihydrouracil + NADP(+) = uracil + NADPH + H(+). It participates in amino-acid biosynthesis; beta-alanine biosynthesis. Its function is as follows. Involved in pyrimidine base degradation. Catalyzes the reduction of uracil to 5,6-dihydrouracil (DHU) by using NADH as a specific cosubstrate and the reduction of thymine to 5,6-dihydrothymine (DHT). Involved in the recycling of nitrogen from nucleobases to general nitrogen metabolism. In Arabidopsis thaliana (Mouse-ear cress), this protein is Dihydropyrimidine dehydrogenase (NADP(+)), chloroplastic.